The primary structure comprises 142 residues: Large ribosomal subunit protein uL11 (142 aa).

It belongs to the universal ribosomal protein uL11 family. As to quaternary structure, part of the ribosomal stalk of the 50S ribosomal subunit. Interacts with L10 and the large rRNA to form the base of the stalk. L10 forms an elongated spine to which L12 dimers bind in a sequential fashion forming a multimeric L10(L12)X complex. Post-translationally, one or more lysine residues are methylated.

Forms part of the ribosomal stalk which helps the ribosome interact with GTP-bound translation factors. The chain is Large ribosomal subunit protein uL11 from Solibacter usitatus (strain Ellin6076).